The primary structure comprises 464 residues: ATP synthase subunit beta (464 aa).

G152–T159 is an ATP binding site.

It belongs to the ATPase alpha/beta chains family. F-type ATPases have 2 components, CF(1) - the catalytic core - and CF(0) - the membrane proton channel. CF(1) has five subunits: alpha(3), beta(3), gamma(1), delta(1), epsilon(1). CF(0) has three main subunits: a(1), b(2) and c(9-12). The alpha and beta chains form an alternating ring which encloses part of the gamma chain. CF(1) is attached to CF(0) by a central stalk formed by the gamma and epsilon chains, while a peripheral stalk is formed by the delta and b chains.

The protein resides in the cell membrane. The enzyme catalyses ATP + H2O + 4 H(+)(in) = ADP + phosphate + 5 H(+)(out). Its function is as follows. Produces ATP from ADP in the presence of a proton gradient across the membrane. The catalytic sites are hosted primarily by the beta subunits. The polypeptide is ATP synthase subunit beta (Clostridioides difficile (strain 630) (Peptoclostridium difficile)).